The primary structure comprises 158 residues: MKLNEIKDNEGSTHSRKRLGRGIGSGSGKTAGRGVKGQKSRSGVAINGFEGGQMPIYRRLPKRGFNNIFASDFVVVSLARIQAAIDAGKLDAKATVDAAALKAAGVIRRAKDGVRVLADGDLKAKITIVVAGASKPAVEKIEKAGGTVTLLSAPAAAE.

The segment covering 1-13 (MKLNEIKDNEGST) has biased composition (basic and acidic residues). Residues 1–44 (MKLNEIKDNEGSTHSRKRLGRGIGSGSGKTAGRGVKGQKSRSGV) are disordered. The span at 21-35 (RGIGSGSGKTAGRGV) shows a compositional bias: gly residues.

This sequence belongs to the universal ribosomal protein uL15 family. As to quaternary structure, part of the 50S ribosomal subunit.

In terms of biological role, binds to the 23S rRNA. In Rhizobium etli (strain ATCC 51251 / DSM 11541 / JCM 21823 / NBRC 15573 / CFN 42), this protein is Large ribosomal subunit protein uL15.